We begin with the raw amino-acid sequence, 1133 residues long: Protein TPR3 (1133 aa).

The LisH domain occupies 4–36 (LSRELVFLILQFLDEEKFKETVHKLEQESGFYF). One can recognise a CTLH domain in the interval 34–92 (FYFNMKYFEDEVINGNWDEVERYLGGFTKVDDNRYSMKIFFEIRKQKYLEALDKHDRSK). The tract at residues 287–307 (PTTANPSMDYPSGDSDHVSKR) is disordered. WD repeat units follow at residues 348 to 388 (SQGS…RLVL), 410 to 449 (DPTVSVNRIIWSPDGTLFGVAYSRHIVQIYSYHGGDDIRQ), 455 to 496 (AHVG…KQFT), 499 to 540 (GHEA…SRVD), 543 to 586 (APGH…VKRT), 590 to 629 (FRKRSMGVVQFDTTRNRFLAAGDEFLIKIWDMDNTSLLTT), 634 to 673 (GGLPASPRVRFNKEGTLLAVSTHENGIKILANADGVRLLR), 771 to 810 (MRTSKISRLIYTNSGVAILALASNAVHLLWKWPRNDRNSS), 837 to 875 (NPEEAVHCFALSKNDSYVMSASGGKISLFNMMTFKTMTT), 878 to 918 (PPPP…VKSK), 921 to 960 (GHSKKITGLAFSNVLNVLVSSGADAQICVWSTDGWDKLKS), and 1014 to 1053 (ENSSPITHAMFSCDSQLIYASFLDATVCIFNASSLRLQCR). The disordered stretch occupies residues 1099-1133 (ESERKWGNPPPAENGSTSALSTPPNGASSSDQPER). The span at 1112 to 1133 (NGSTSALSTPPNGASSSDQPER) shows a compositional bias: polar residues.

In terms of assembly, tetramer. Interacts with D53. Interacts with MODD and HDAC1. Interacts with WOX1. Interacts with MOF1. Expressed in panicles, stems, leaves, spikelets and seed endosperm.

Its function is as follows. Probable downstream regulator of strigolactones signaling. Functions in a complex with MODD and HDAC1 to down-regulate the histone acetylation level at BZIP46 target genes. BZIP46 is a positive regulator of abscisic acid (ABA) signaling and drought stress tolerance. This chain is Protein TPR3, found in Oryza sativa subsp. japonica (Rice).